Consider the following 75-residue polypeptide: Putative DNA-directed RNA polymerase subunit omega (75 aa).

Belongs to the RNA polymerase subunit omega family.

It localises to the plastid. It is found in the chloroplast. The catalysed reaction is RNA(n) + a ribonucleoside 5'-triphosphate = RNA(n+1) + diphosphate. May be involved in RNA polymerase activity. This Porphyra purpurea (Red seaweed) protein is Putative DNA-directed RNA polymerase subunit omega (rpoZ).